The chain runs to 509 residues: Maturase K (509 aa).

Belongs to the intron maturase 2 family. MatK subfamily.

The protein localises to the plastid. It is found in the chloroplast. In terms of biological role, usually encoded in the trnK tRNA gene intron. Probably assists in splicing its own and other chloroplast group II introns. This chain is Maturase K, found in Clematis ligusticifolia (Western white clematis).